The primary structure comprises 465 residues: Serine carboxypeptidase-like 46 (465 aa).

The signal sequence occupies residues 1 to 25 (MPRLQCLTMATSLILLLQALSLVSS). Intrachain disulfides connect Cys88–Cys344, Cys245–Cys263, and Cys288–Cys313. N-linked (GlcNAc...) asparagine glycosylation is found at Asn137 and Asn170. The active site involves Ser179. Asn246 is a glycosylation site (N-linked (GlcNAc...) asparagine). Catalysis depends on residues Asp381 and His438.

Belongs to the peptidase S10 family. Ubiquitous.

The protein resides in the secreted. Functionally, probable carboxypeptidase. The sequence is that of Serine carboxypeptidase-like 46 (SCPL46) from Arabidopsis thaliana (Mouse-ear cress).